The sequence spans 364 residues: Protein Wnt-6 (364 aa).

The N-terminal stretch at 1–23 (MLPPVPSRLGLLLLLLCPAHVDG) is a signal peptide. Cystine bridges form between cysteine 75–cysteine 86, cysteine 123–cysteine 131, cysteine 133–cysteine 171, cysteine 221–cysteine 235, cysteine 223–cysteine 230, cysteine 293–cysteine 324, cysteine 309–cysteine 319, cysteine 323–cysteine 363, cysteine 339–cysteine 354, cysteine 341–cysteine 351, and cysteine 346–cysteine 347. An N-linked (GlcNAc...) asparagine glycan is attached at asparagine 85. Positions 140 to 162 (APPRPSGLLGTPGPPGPTGSPDA) are disordered. Serine 227 carries O-palmitoleoyl serine; by PORCN lipidation. The N-linked (GlcNAc...) asparagine glycan is linked to asparagine 310.

It belongs to the Wnt family. As to quaternary structure, interacts with PORCN. Post-translationally, palmitoleoylation is required for efficient binding to frizzled receptors. Depalmitoleoylation leads to Wnt signaling pathway inhibition. As to expression, detected in ileum, colon and stomach (at protein level).

It is found in the secreted. It localises to the extracellular space. The protein resides in the extracellular matrix. Functionally, ligand for members of the frizzled family of seven transmembrane receptors. Probable developmental protein. May be a signaling molecule which affects the development of discrete regions of tissues. Is likely to signal over only few cell diameters. This chain is Protein Wnt-6 (Wnt6), found in Mus musculus (Mouse).